Here is a 1077-residue protein sequence, read N- to C-terminus: Adenylate cyclase type 4 (1077 aa).

Topologically, residues methionine 1 to proline 28 are cytoplasmic. The next 6 membrane-spanning stretches (helical) occupy residues leucine 29–alanine 50, phenylalanine 61–serine 80, glycine 94–tryptophan 117, valine 120–methionine 138, alanine 141–tryptophan 162, and leucine 170–tyrosine 190. At histidine 191 to lysine 582 the chain is on the cytoplasmic side. Aspartate 278, isoleucine 279, and aspartate 322 together coordinate Mg(2+). Residues aspartate 278–threonine 283, leucine 320–aspartate 322, and arginine 366 each bind ATP. The tract at residues threonine 503 to proline 524 is disordered. Serine 517 carries the phosphoserine modification. Threonine 533 carries the phosphothreonine modification. 3 consecutive transmembrane segments (helical) span residues tyrosine 583–threonine 604, alanine 608–glutamate 630, and valine 661–valine 684. The Extracellular segment spans residues serine 685–leucine 717. N-linked (GlcNAc...) asparagine glycosylation is found at asparagine 694 and asparagine 701. A run of 3 helical transmembrane segments spans residues isoleucine 718–leucine 738, leucine 746–tryptophan 766, and methionine 793–alanine 809. The Cytoplasmic segment spans residues arginine 810–serine 1077. ATP-binding positions include lysine 927, aspartate 1007 to tryptophan 1009, asparagine 1014 to arginine 1018, and lysine 1054.

Belongs to the adenylyl cyclase class-4/guanylyl cyclase family. It depends on Mg(2+) as a cofactor. Mn(2+) serves as cofactor.

Its subcellular location is the cell membrane. It localises to the cytoplasm. It catalyses the reaction ATP = 3',5'-cyclic AMP + diphosphate. Its activity is regulated as follows. Activated by forskolin. Insensitive to calcium/calmodulin. Stimulated by GNAS and by the G-protein beta and gamma subunit complex. In terms of biological role, catalyzes the formation of the signaling molecule cAMP in response to G-protein signaling. In Mus musculus (Mouse), this protein is Adenylate cyclase type 4 (Adcy4).